A 92-amino-acid polypeptide reads, in one-letter code: Cell division protein FtsB (92 aa).

Residues 1 to 3 lie on the Cytoplasmic side of the membrane; the sequence is MRL. The helical transmembrane segment at 4–21 threads the bilayer; the sequence is LILILLSVLVLFQHDFWF. The Periplasmic segment spans residues 22 to 92; that stretch reads GSNGFLDYRQ…VFYHIVKESK (71 aa). A coiled-coil region spans residues 28 to 63; the sequence is DYRQNAEKIKENQAENEKLSQRNQRINAEIQGLTKG.

It belongs to the FtsB family. As to quaternary structure, part of a complex composed of FtsB, FtsL and FtsQ.

Its subcellular location is the cell inner membrane. Functionally, essential cell division protein. May link together the upstream cell division proteins, which are predominantly cytoplasmic, with the downstream cell division proteins, which are predominantly periplasmic. In Haemophilus influenzae (strain PittEE), this protein is Cell division protein FtsB.